The sequence spans 21 residues: DYE-linked aldehyde dehydrogenase, gamma chain (21 aa).

As to quaternary structure, heterotetramer composed of an alpha, a beta and two gamma chains. It depends on [2Fe-2S] cluster as a cofactor.

Active with aldehydes and formate esters as substrates. In Amycolatopsis methanolica, this protein is DYE-linked aldehyde dehydrogenase, gamma chain.